Reading from the N-terminus, the 1640-residue chain is RING finger protein 17 (1640 aa).

The RING-type zinc finger occupies 30–73 (CTRCGRKVSVASGDHHKFPCGHAFCELCLLAPQEYTTSKCTDCE). Ser-134 is subject to Phosphoserine. Position 229 is an N6-acetyllysine (Lys-229). Disordered regions lie at residues 348 to 376 (TDET…TKEM) and 413 to 435 (DDPI…APVG). Over residues 360 to 373 (APDRHLEGKKKQPT) the composition is skewed to basic and acidic residues. 2 Tudor domains span residues 751-809 (CPLQ…FLEP) and 985-1044 (KWEC…LKTM). The segment covering 1170–1184 (NEHKVPDSKGKKSES) has biased composition (basic and acidic residues). The interval 1170–1191 (NEHKVPDSKGKKSESRSTGCYR) is disordered. 2 Tudor domains span residues 1246–1303 (SWKK…PDTP) and 1496–1556 (DFSS…LMQY).

Interacts with MXD1, MXD3, MXD4, MXI1 and PIWIL1. Self-associates. Expressed at high levels in adult testis. Expressed in male germ cells (at protein level). Expressed at lower levels in adult thyroid, submaxillary gland, ovary and epididymis.

Its subcellular location is the cytoplasm. The protein localises to the nucleus. Seems to be involved in regulation of transcriptional activity of MYC. In vitro, inhibits DNA-binding activity of Mad-MAX heterodimers. Can recruit Mad transcriptional repressors (MXD1, MXD3, MXD4 and MXI1) to the cytoplasm. May be involved in spermiogenesis. This chain is RING finger protein 17 (Rnf17), found in Mus musculus (Mouse).